The chain runs to 631 residues: 30-kDa cleavage and polyadenylation specificity factor 30 (631 aa).

Residues 12–38 (EGGLDSGPVQNTASVPVAPPENSSSAA) are disordered. C3H1-type zinc fingers lie at residues 60-87 (SFRQ…HQFD), 88-112 (KARM…VYKH), and 114-141 (NEDI…HAKL). The tract at residues 179-234 (QDRPQGQVPMQGQPQESGNLQQQQQQQPQQSQHQVSQTLIPNPADQTNRTSHPLPQ) is disordered. Residues 182-215 (PQGQVPMQGQPQESGNLQQQQQQQPQQSQHQVSQ) are compositionally biased toward low complexity. The span at 216-231 (TLIPNPADQTNRTSHP) shows a compositional bias: polar residues. Positions 237–372 (NRYFVVKSNN…SVGEQLASLL (136 aa)) constitute a YTH domain. The span at 392-407 (EEEKAKGVNPESRAEN) shows a compositional bias: basic and acidic residues. Disordered stretches follow at residues 392–447 (EEEK…RGIM) and 541–631 (PHMG…KKRR). The span at 412-432 (PFEDNEEEEEEEDESEEEEES) shows a compositional bias: acidic residues. Residues 573 to 583 (KTPERSDERGV) are compositionally biased toward basic and acidic residues. 2 positions are modified to phosphoserine: Ser610 and Ser612. Positions 621-631 (RSRHGEGKKRR) are enriched in basic residues.

The protein belongs to the CPSF4/YTH1 family. As to quaternary structure, component of the cleavage and polyadenylation specificity factor (CPSF) complex. Can form homodimers. Binds to calmodulin. Forms a complex with cleavage and polyadenylation specificity factor (CPSF) subunits CPSF73-I, CPSF73-II, CPSF100, CPSF160, CFIS2, FIPS3, FIPS5, PAPS2, PAPS3, CLPS3, PCFS1, PCFS4, CSTF50 and CSTF77. In terms of tissue distribution, expressed in seedlings, roots, leaves, siliques, stems and flowers.

The protein localises to the nucleus. The protein resides in the cytoplasm. Its activity is regulated as follows. Endonuclease activity is repressed by the N-terminal domain of FIPS5. Nuclease activity is inhibited by zinc (&gt;100 uM), cadmium in a progressive manner (50 percent activity at 1 mM Cd(2+)), and high salt levels (e.g. KCl or NaCl &gt;600 mM). Stimulated by ATP in the presence of Zn(2+), even at inhibitory zinc concentrations. Elevated temperatures prevent RNA-binding at 55 degrees Celsius, but endonuclease activity at 70 degrees Celsius. The sulfhydryl reagent dithiothreitol (DTT) inhibits both RNA-binding and nuclease activities. Component of the cleavage and polyadenylation specificity factor (CPSF) complex that play a key role in pre-mRNA 3'-end formation. May interact with poly(A) polymerase and other factors to bring about cleavage and poly(A) addition. Mediates poly(A) site selection. Binds RNA in a calcium-dependent manner. Exhibits endonuclease activity with an ability to nick and degrade linear as well as circular single-stranded RNA that leaves RNA 3' ends with hydroxyl groups, thus mediating processing of the pre-mRNA as a prelude to the polyadenylation. Involved in the post-transcriptional control, probably via poly(A) addition, of the responses of plants to stress, especially genes mediating tolerance to oxidative stress. Plays a role in the regulation of salicylic acid (SA) production via the control of messenger RNA 3' end processing, thus being a key component of programmed cell death and plant immune responses required for resistance to virulent Pseudomonas syringae pv tomato DC3000 (Pst). The polypeptide is 30-kDa cleavage and polyadenylation specificity factor 30 (Arabidopsis thaliana (Mouse-ear cress)).